Here is a 434-residue protein sequence, read N- to C-terminus: Histidinol dehydrogenase (434 aa).

Residues Tyr-130, Gln-188, and Asn-211 each coordinate NAD(+). Substrate is bound by residues Ser-237, Gln-259, and His-262. Zn(2+) contacts are provided by Gln-259 and His-262. Active-site proton acceptor residues include Glu-326 and His-327. Residues His-327, Asp-360, Glu-414, and His-419 each contribute to the substrate site. Residue Asp-360 coordinates Zn(2+). His-419 provides a ligand contact to Zn(2+).

It belongs to the histidinol dehydrogenase family. Homodimer. Requires Zn(2+) as cofactor.

It catalyses the reaction L-histidinol + 2 NAD(+) + H2O = L-histidine + 2 NADH + 3 H(+). The protein operates within amino-acid biosynthesis; L-histidine biosynthesis; L-histidine from 5-phospho-alpha-D-ribose 1-diphosphate: step 9/9. In terms of biological role, catalyzes the sequential NAD-dependent oxidations of L-histidinol to L-histidinaldehyde and then to L-histidine. This chain is Histidinol dehydrogenase, found in Shigella sonnei (strain Ss046).